Reading from the N-terminus, the 498-residue chain is POU domain protein 2, isoform A (498 aa).

Over residues 1-30 the composition is skewed to low complexity; it reads MMVLQQQQQQRLWDATTTSNTNTQTQQSAN. A disordered region spans residues 1–35; that stretch reads MMVLQQQQQQRLWDATTTSNTNTQTQQSANVESTP. 5 positions are modified to phosphoserine: Ser-72, Ser-211, Ser-215, Ser-217, and Ser-219. A disordered region spans residues 191–273; the sequence is QMKQQQREDP…STPKPTSGLT (83 aa). Over residues 207–222 the composition is skewed to low complexity; that stretch reads PLAKSPLRSPSLSPVP. The span at 228–251 shows a compositional bias: polar residues; sequence QQRTPPNSMTANSLGMSSAVMTPN. Low complexity predominate over residues 252–270; that stretch reads TPSMQQQPQLQQSTPKPTS. The region spanning 286–360 is the POU-specific domain; that stretch reads EETTDLEELE…LLQKWLEDAD (75 aa). Positions 391-450 form a DNA-binding region, homeobox; sequence RRKKRTSIETTVRTTLEKAFLMNCKPTSEEISQLSERLNMDKEVIRVWFCNRRQKEKRIN.

This sequence belongs to the POU transcription factor family. Class-2 subfamily. In terms of tissue distribution, initial expression in cellular blastoderm stage, then in ectodermal stripes during germband extension. Broad expression in the neuroectoderm followed by limitation to discrete subsets of CNS cells, and expression in specific PNS neurons and support cells.

Its subcellular location is the nucleus. In terms of biological role, DNA-binding regulatory protein implicated in early development. Involved in neuronal cell fate decision. May act as an octamer-dependent activator of transcription. Could also play an early role in specific ectodermal cells, and a subsequent role in the embryonic nervous system. This Drosophila melanogaster (Fruit fly) protein is POU domain protein 2, isoform A (pdm2).